The primary structure comprises 86 residues: Haditoxin (86 aa).

The first 21 residues, 1 to 21 (MKTLLLTLVVVTIVYLDLGYT), serve as a signal peptide directing secretion. 4 cysteine pairs are disulfide-bonded: Cys24–Cys45, Cys38–Cys62, Cys66–Cys78, and Cys79–Cys84.

Belongs to the three-finger toxin family. Short-chain subfamily. Orphan group VIII (haditoxin) sub-subfamily. As to quaternary structure, homodimer; non-covalently linked. As to expression, expressed by the venom gland.

It is found in the secreted. Antagonist of muscle (alpha-1-beta-1-delta-epsilon/CHRNA1-CHRNB1-CHRND-CHRNE) and neuronal (alpha-7/CHRNA7, alpha-3-beta-2/CHRNA3-CHRNB2, alpha-4-beta-2/CHRNA4-CHRNB2) nicotinic acetylcholine receptors (nAChR). The highest affinity is for human alpha-7/CHRNA7 nAChRs (IC(50)=180 nM), compared to human alpha-1-beta-1-delta-epsilon/CHRNA1-CHRNB1-CHRND-CHRNE nAChR (IC(50)= 550 nM), alpha-3-beta-2/CHRNA3-CHRNB2 nAChR (IC(50)=500 nM), and alpha-4-beta-2/CHRNA4-CHRNB2 nAChR (IC(50)=2.6 uM). This Ophiophagus hannah (King cobra) protein is Haditoxin.